Reading from the N-terminus, the 312-residue chain is Ribosomal protein uL3 glutamine methyltransferase (312 aa).

This sequence belongs to the protein N5-glutamine methyltransferase family. PrmB subfamily.

The catalysed reaction is L-glutaminyl-[ribosomal protein uL3] + S-adenosyl-L-methionine = N(5)-methyl-L-glutaminyl-[ribosomal protein uL3] + S-adenosyl-L-homocysteine + H(+). Methylates large ribosomal subunit protein uL3 on a specific glutamine residue. This Xylella fastidiosa (strain 9a5c) protein is Ribosomal protein uL3 glutamine methyltransferase.